The following is a 213-amino-acid chain: 5-deoxy-D-ribulose 1-phosphate aldolase (213 aa).

Residues 28–29, 45–46, and 74–76 contribute to the substrate site; these read GN, SG, and SSE. Residue E76 is the Proton donor/acceptor of the active site. E76, H95, H97, and H157 together coordinate Mn(2+).

It belongs to the aldolase class II family. Forms homooligomers, possibly homotetramers. It depends on Mn(2+) as a cofactor.

It catalyses the reaction 5-deoxy-D-ribulose 1-phosphate = dihydroxyacetone phosphate + acetaldehyde. It functions in the pathway carbohydrate degradation. In terms of biological role, catalyzes the cleavage of 5-deoxy-D-ribulose 1-phosphate to yield dihydroxyacetone phosphate (DHAP) and acetaldehyde, as part of a 5-deoxyribose salvage pathway that recycles this toxic radical SAM enzyme by-product to mainstream metabolites. Is also able to catalyze the reverse reaction, using several aldehydes as substrate, with acetaldehyde being the preferred substrate. In Bacillus thuringiensis serovar kurstaki (strain ATCC 35866 / NRRL B-4488 / HD73), this protein is 5-deoxy-D-ribulose 1-phosphate aldolase.